The sequence spans 208 residues: Single-stranded DNA-binding protein DdrA (208 aa).

This sequence belongs to the RAD52 family. As to quaternary structure, homooligomer composed of 8 to 10 subunits; probably arranged in a ring-structure.

Its function is as follows. ssDNA-binding protein that contributes to the ionizing radiation resistance of D.radiodurans. Plays a role in DNA repair and genome reconstitution, in a RecA-independent process, since DdrA is essential for recovery from severe genomic fragmentation as a result of exposure to severe levels of ionizing radiation in an environment lacking nutrients. In vitro, binds to the 3'-ends of single-stranded DNA, protecting them from nuclease degradation. Thus, DdrA is part of a DNA end-protection system that helps to preserve genome integrity following irradiation or desiccation. Does not display DNA strand annealing activity, unlike eukaryotic Rad52 protein homologs. This chain is Single-stranded DNA-binding protein DdrA (ddrA), found in Deinococcus radiodurans (strain ATCC 13939 / DSM 20539 / JCM 16871 / CCUG 27074 / LMG 4051 / NBRC 15346 / NCIMB 9279 / VKM B-1422 / R1).